We begin with the raw amino-acid sequence, 379 residues long: Cytochrome b (379 aa).

A run of 4 helical transmembrane segments spans residues 33–53 (FGSL…FLAM), 77–98 (WILR…YIHV), 113–133 (WNIG…GYVL), and 178–198 (FFAF…VHLL). H83 and H97 together coordinate heme b. The heme b site is built by H182 and H196. H201 lines the a ubiquinone pocket. Transmembrane regions (helical) follow at residues 226–246 (IKDI…VLFS), 288–308 (LGGV…PVLH), 320–340 (LSQC…WIGG), and 347–367 (YVIX…XXXX).

The protein belongs to the cytochrome b family. In terms of assembly, the cytochrome bc1 complex contains 11 subunits: 3 respiratory subunits (MT-CYB, CYC1 and UQCRFS1), 2 core proteins (UQCRC1 and UQCRC2) and 6 low-molecular weight proteins (UQCRH/QCR6, UQCRB/QCR7, UQCRQ/QCR8, UQCR10/QCR9, UQCR11/QCR10 and a cleavage product of UQCRFS1). This cytochrome bc1 complex then forms a dimer. It depends on heme b as a cofactor.

Its subcellular location is the mitochondrion inner membrane. Component of the ubiquinol-cytochrome c reductase complex (complex III or cytochrome b-c1 complex) that is part of the mitochondrial respiratory chain. The b-c1 complex mediates electron transfer from ubiquinol to cytochrome c. Contributes to the generation of a proton gradient across the mitochondrial membrane that is then used for ATP synthesis. The chain is Cytochrome b (MT-CYB) from Myotis goudotii (Malagasy mouse-eared bat).